A 295-amino-acid polypeptide reads, in one-letter code: HTH-type transcriptional regulator ShiR (295 aa).

The HTH lysR-type domain maps to 1-58; that stretch reads MEIRWLEGFIAVAEELHFSNAAIRLGMPQSPLSQLIRRLESELGQKLFDRSTRSVELT. The H-T-H motif DNA-binding region spans 18–37; it reads FSNAAIRLGMPQSPLSQLIR.

The protein belongs to the LysR transcriptional regulatory family.

Functionally, activates expression of the shikimate transporter ShiA in the presence of shikimate. Binds to the shiA promoter region. This Corynebacterium glutamicum (strain R) protein is HTH-type transcriptional regulator ShiR.